Consider the following 645-residue polypeptide: MNKQQKEFKSFYSIRKSSLGVASVAISTLLLLMSNGEAQAAAEETGGTNTEAQPKTEAVASPTTTSEKAPETKPVANAVSVSNKEVEAPTSETKEAKEVKEVKAPKETKEVKPAAKATNNTYPILNQELREAIKNPAIKDKDHSAPNSRPIDFEMKKKDGTQQFYHYASSVKPARVIFTDSKPEIELGLQSGQFWRKFEVYEGDKKLPIKLVSYDTVKDYAYIRFSVSNGTKAVKIVSSTHFNNKEEKYDYTLMEFAQPIYNSADKFKTEEDYKAEKLLAPYKKAKTLERQVYELNKIQDKLPEKLKAEYKKKLEDTKKALDEQVKSAITEFQNVQPTNEKMTDLQDTKYVVYESVENNESMMDTFVKHPIKTGMLNGKKYMVMETTNDDYWKDFMVEGQRVRTISKDAKNNTRTIIFPYVEGKTLYDAIVKVHVKTIDYDGQYHVRIVDKEAFTKANTDKSNKKEQQDNSAKKEATPATPSKPTPSPVEKESQKQDSQKDDNKQLPSVEKENDASSESGKDKTPATKPTKGEVESSSTTPTKVVSTTQNVAKPTTASSKTTKDVVQTSAGSSEAKDSAPLQKANIKNTNDGHTQSQNNKNTQENKAKSLPQTGEESNKDMTLPLMALLALSSIVAFVLPRKRKN.

An N-terminal signal peptide occupies residues 1-40 (MNKQQKEFKSFYSIRKSSLGVASVAISTLLLLMSNGEAQA). The short motif at 12-23 (YSIRKSSLGVAS) is the YSIRK-G/S signaling motif element. Over residues 38 to 53 (AQAAAEETGGTNTEAQ) the composition is skewed to low complexity. A disordered region spans residues 38 to 113 (AQAAAEETGG…APKETKEVKP (76 aa)). Residues 84 to 113 (KEVEAPTSETKEAKEVKEVKAPKETKEVKP) show a composition bias toward basic and acidic residues. 2 consecutive NEAT domains span residues 144–269 (SAPN…KFKT) and 341–458 (KMTD…TKAN). Met362 and Tyr440 together coordinate heme. Basic and acidic residues-rich tracts occupy residues 458-476 (NTDK…KKEA) and 489-534 (VEKE…KGEV). The interval 458–619 (NTDKSNKKEQ…LPQTGEESNK (162 aa)) is disordered. The span at 535–560 (ESSSTTPTKVVSTTQNVAKPTTASSK) shows a compositional bias: low complexity. A compositionally biased stretch (polar residues) spans 585–615 (NIKNTNDGHTQSQNNKNTQENKAKSLPQTGE). The LPXTG sorting signal motif lies at 610 to 614 (LPQTG). Thr613 carries the post-translational modification Pentaglycyl murein peptidoglycan amidated threonine. Residues 614-645 (GEESNKDMTLPLMALLALSSIVAFVLPRKRKN) constitute a propeptide, removed by sortase.

Belongs to the IsdB family. Interacts with host HBA; this interaction allows heme extraction as iron source. Interacts with IsdA.

It localises to the secreted. The protein resides in the cell wall. Functionally, cell wall-anchored surface receptor that extracts heme from oxidized metHb to enable growth on hemoglobin as a sole iron source. Rapidly extracts heme from hemoglobin and transfers it to IsdA or IsdC, which then relays it to the membrane transporter/IsdEF for internalization. Also promotes resistance to hydrogen peroxide and killing by neutrophils. In Staphylococcus aureus (strain USA300 / TCH1516), this protein is Iron-regulated surface determinant protein B (isdB).